Consider the following 706-residue polypeptide: Elongation factor G (706 aa).

Residues 12–288 enclose the tr-type G domain; it reads EKTRNIGIMA…GVTNYLPSPN (277 aa). GTP is bound by residues 21-28, 85-89, and 139-142; these read AHIDAGKT, DTPGH, and NKMD. Residues 288–309 form a disordered region; sequence NDVPAITGHHPQDKEEDITRHP. Positions 297 to 309 are enriched in basic and acidic residues; that stretch reads HPQDKEEDITRHP.

The protein belongs to the TRAFAC class translation factor GTPase superfamily. Classic translation factor GTPase family. EF-G/EF-2 subfamily.

The protein localises to the cytoplasm. Functionally, catalyzes the GTP-dependent ribosomal translocation step during translation elongation. During this step, the ribosome changes from the pre-translocational (PRE) to the post-translocational (POST) state as the newly formed A-site-bound peptidyl-tRNA and P-site-bound deacylated tRNA move to the P and E sites, respectively. Catalyzes the coordinated movement of the two tRNA molecules, the mRNA and conformational changes in the ribosome. The sequence is that of Elongation factor G from Salinibacter ruber (strain DSM 13855 / M31).